Here is a 642-residue protein sequence, read N- to C-terminus: Threonine--tRNA ligase (642 aa).

Residues 1 to 61 (MPIITLPDGS…TADSELAIIT (61 aa)) enclose the TGS domain. Residues 243-534 (DHRKIGKQLD…LIEEYAGKFP (292 aa)) form a catalytic region. Zn(2+) contacts are provided by C334, H385, and H511.

This sequence belongs to the class-II aminoacyl-tRNA synthetase family. In terms of assembly, homodimer. It depends on Zn(2+) as a cofactor.

It is found in the cytoplasm. The catalysed reaction is tRNA(Thr) + L-threonine + ATP = L-threonyl-tRNA(Thr) + AMP + diphosphate + H(+). Functionally, catalyzes the attachment of threonine to tRNA(Thr) in a two-step reaction: L-threonine is first activated by ATP to form Thr-AMP and then transferred to the acceptor end of tRNA(Thr). Also edits incorrectly charged L-seryl-tRNA(Thr). This is Threonine--tRNA ligase from Shewanella frigidimarina (strain NCIMB 400).